We begin with the raw amino-acid sequence, 141 residues long: Translation initiation factor 2 subunit beta (141 aa).

This sequence belongs to the eIF-2-beta/eIF-5 family. In terms of assembly, heterotrimer composed of an alpha, a beta and a gamma chain.

Its function is as follows. eIF-2 functions in the early steps of protein synthesis by forming a ternary complex with GTP and initiator tRNA. The chain is Translation initiation factor 2 subunit beta from Thermofilum pendens (strain DSM 2475 / Hrk 5).